We begin with the raw amino-acid sequence, 315 residues long: Phosphomutase-like protein 3 (315 aa).

Positions 1 to 19 (MQQFLTLGALWTLFNVATT) are cleaved as a signal peptide. His77 serves as the catalytic Tele-phosphohistidine intermediate. Asn88 and Asn154 each carry an N-linked (GlcNAc...) asparagine glycan. Glu173 (proton donor/acceptor) is an active-site residue. A glycan (N-linked (GlcNAc...) asparagine) is linked at Asn185. Asn286 is lipidated: GPI-anchor amidated asparagine. Positions 287 to 315 (DAWDTFKDWCPNPPASISGTATSTATGSA) are cleaved as a propeptide — removed in mature form.

The protein belongs to the phosphoglycerate mutase family.

Its subcellular location is the cell membrane. This is Phosphomutase-like protein 3 (PGA12) from Candida albicans (strain SC5314 / ATCC MYA-2876) (Yeast).